The chain runs to 484 residues: Myosin-binding protein H (484 aa).

The segment at 1 to 78 is disordered; sequence MTGKATPEAS…KPEAPSEDVP (78 aa). Thr-2, Thr-6, and Thr-26 each carry phosphothreonine. The span at 41–71 shows a compositional bias: low complexity; sequence QEQAPEPQKQPQAQDPAAHEAPATPATTKPE. The Fibronectin type-III 1 domain occupies 80–175; it reads APLQLTLEDV…LDQPVHIQEI (96 aa). The 89-residue stretch at 179–267 folds into the Ig-like C2-type 1 domain; sequence PKIRVPRHLR…EGLEAKAAID (89 aa). In terms of domain architecture, Fibronectin type-III 2 spans 276–371; the sequence is PPSSIKLLDV…TKELAHIHKA (96 aa). In terms of domain architecture, Ig-like C2-type 2 spans 389 to 479; sequence PSFTQPVADR…PAVDCRLEVK (91 aa).

This sequence belongs to the immunoglobulin superfamily. MyBP family. As to expression, skeletal muscle.

Binds to myosin; probably involved in interaction with thick myofilaments in the A-band. The sequence is that of Myosin-binding protein H (Mybph) from Rattus norvegicus (Rat).